The sequence spans 503 residues: MEEFQGYLELYRSQQHDFLYPLIFREYIYALAHDRGLNRSVLLDNVGYDKKSSLLIIKRLISRMYQQNHFLISVNDSNQNKFFGYNKNLYSQIISEGFAVIVEIPFSLRLVSSLKETETVKSYNLRSIHSIFPFFEDKFPHLNYASDVLIPYPIHLEILVQTLRYCVKDPSSLHLLRLFLHEYYNWNTLITPKKSIFAKSNQRLFLLLYNSYVCEYESILLFLRNQSNHLRLTSFGILFERIRFYEKIKYPVEEVFANDFPATLWFFKDPFIQYVRYQGKSILASKDTPLLMNKWKYYLVHFWQCHFYVWFQPGRIHINQLSKHSFDFLGYLSSIRPNISVVRSQLLENSFLMDNAMKKLDTLFPIIPMIGSLAKVKFCNTSGHPISKSSWADSSDSDIIDRFVRIGGNLSHYYSGSSKKKSLYRIKYILRLSCVKTLARKHKSTVRTFLKRLGPKLLDEFFTEEEQIFSLLFPRTSSTLKRFYRGRIWYLDILCINDLVNHE.

This sequence belongs to the intron maturase 2 family. MatK subfamily.

It localises to the plastid. Its subcellular location is the chloroplast. Its function is as follows. Usually encoded in the trnK tRNA gene intron. Probably assists in splicing its own and other chloroplast group II introns. This chain is Maturase K, found in Rosa rugosa (Rugosa rose).